We begin with the raw amino-acid sequence, 112 residues long: ATP synthase epsilon chain (112 aa).

Belongs to the ATPase epsilon chain family. F-type ATPases have 2 components, CF(1) - the catalytic core - and CF(0) - the membrane proton channel. CF(1) has five subunits: alpha(3), beta(3), gamma(1), delta(1), epsilon(1). CF(0) has three main subunits: a, b and c.

The protein resides in the cell inner membrane. Its function is as follows. Produces ATP from ADP in the presence of a proton gradient across the membrane. In Rickettsia felis (strain ATCC VR-1525 / URRWXCal2) (Rickettsia azadi), this protein is ATP synthase epsilon chain.